The sequence spans 989 residues: R3H domain-containing protein 2 (989 aa).

Disordered stretches follow at residues 23 to 71 (EESV…AKSN) and 106 to 147 (SCPS…QEYT). Residues 36–56 (PSKEEIEKESEDTSLRQETQR) are compositionally biased toward basic and acidic residues. Ser37 is modified (phosphoserine). Residues 58 to 71 (TSNHGHARKRAKSN) show a composition bias toward basic residues. The span at 109 to 143 (SDKEEEKSTKDVSEKEDKDKNKEKVPRRMLSRDSS) shows a compositional bias: basic and acidic residues. Ser143 bears the Phosphoserine mark. The 64-residue stretch at 169–232 (RMMLLKLEQE…AVIINKTSNT (64 aa)) folds into the R3H domain. In terms of domain architecture, SUZ spans 233-303 (RIPEQRFSEH…VRERIFARET (71 aa)). Disordered stretches follow at residues 267-288 (DDNQ…EERE), 306-390 (NGYL…ISRP), 416-479 (TAQQ…FQPP), 493-524 (ASTG…GYMQ), 674-738 (GTSP…PSMV), 751-793 (RGQK…SLSN), and 848-867 (QGQS…LKSA). The segment covering 277-288 (DGRRSKSIEERE) has biased composition (basic and acidic residues). Residues 320 to 331 (SRTSSSRQSSTD) are compositionally biased toward low complexity. A phosphoserine mark is found at Ser344, Ser347, and Ser363. Residues 416–428 (TAQQQQQQQQQLP) show a composition bias toward low complexity. Polar residues-rich tracts occupy residues 454–466 (PFGQ…QGST) and 493–517 (ASTG…QQVL). Positions 695-704 (SPSPCSPPQM) are enriched in pro residues. The segment covering 705–727 (PQQYSGVSPSGPGVVVMQLNVPN) has biased composition (low complexity). A compositionally biased stretch (polar residues) spans 761 to 771 (PESSPQANTQM). A compositionally biased stretch (low complexity) spans 772 to 790 (SSSPVTSPTQSPAPSPVTS). Phosphoserine is present on residues Ser866 and Ser868. Residues Thr869 and Thr873 each carry the phosphothreonine modification.

Its subcellular location is the nucleus. The sequence is that of R3H domain-containing protein 2 (R3HDM2) from Bos taurus (Bovine).